The sequence spans 284 residues: MIASAPGKIILFGEHAVVYGRHAVVSAINLRCRVSVRKSDRFLIRSSLGESGLDYQRHPYVVQAVKRFGELRNIPGAEIEIESEIPIGSGLGSSAAVIVATIAALNAEFDGDMDKEAIFQMAKQVEIDVQGRASGIDPFISTFGGSWLFPERRKVEMPFKFFVINFGSRSTAEMVAKVAELRERHPEVVDKIFDAIDAISLEASDVGSAERLEELIAINQSLLRAIGVSNPEIDRTIAELERMGLNAKITGAGGGGCIFGLFKGEKPKGSFIVEPEKEGVRIEE.

86–96 (PIGSGLGSSAA) is a binding site for ATP. The Proton acceptor role is filled by aspartate 137.

It belongs to the GHMP kinase family. Mevalonate kinase subfamily. As to quaternary structure, homodimer. Requires Mg(2+) as cofactor.

It localises to the cytoplasm. It carries out the reaction (R)-mevalonate + ATP = (R)-5-phosphomevalonate + ADP + H(+). Its pathway is isoprenoid biosynthesis; isopentenyl diphosphate biosynthesis via mevalonate pathway; isopentenyl diphosphate from (R)-mevalonate: step 1/3. Its function is as follows. Catalyzes the phosphorylation of (R)-mevalonate (MVA) to (R)-mevalonate 5-phosphate (MVAP). Functions in the mevalonate (MVA) pathway leading to isopentenyl diphosphate (IPP), a key precursor for the biosynthesis of isoprenoid compounds such as archaeal membrane lipids. The chain is Mevalonate kinase from Archaeoglobus fulgidus (strain ATCC 49558 / DSM 4304 / JCM 9628 / NBRC 100126 / VC-16).